The chain runs to 344 residues: tRNA N6-adenosine threonylcarbamoyltransferase (344 aa).

Fe cation contacts are provided by His-112 and His-116. Substrate is bound by residues 135-139 (LVSGG), Asp-168, Gly-181, and Asn-271. Residue Asp-299 participates in Fe cation binding.

Belongs to the KAE1 / TsaD family. Fe(2+) is required as a cofactor.

Its subcellular location is the cytoplasm. It catalyses the reaction L-threonylcarbamoyladenylate + adenosine(37) in tRNA = N(6)-L-threonylcarbamoyladenosine(37) in tRNA + AMP + H(+). Its function is as follows. Required for the formation of a threonylcarbamoyl group on adenosine at position 37 (t(6)A37) in tRNAs that read codons beginning with adenine. Is involved in the transfer of the threonylcarbamoyl moiety of threonylcarbamoyl-AMP (TC-AMP) to the N6 group of A37, together with TsaE and TsaB. TsaD likely plays a direct catalytic role in this reaction. The protein is tRNA N6-adenosine threonylcarbamoyltransferase of Sphingopyxis alaskensis (strain DSM 13593 / LMG 18877 / RB2256) (Sphingomonas alaskensis).